A 316-amino-acid chain; its full sequence is Pantothenate kinase (316 aa).

95-102 (GSVAVGKS) lines the ATP pocket.

This sequence belongs to the prokaryotic pantothenate kinase family.

Its subcellular location is the cytoplasm. The enzyme catalyses (R)-pantothenate + ATP = (R)-4'-phosphopantothenate + ADP + H(+). It participates in cofactor biosynthesis; coenzyme A biosynthesis; CoA from (R)-pantothenate: step 1/5. The polypeptide is Pantothenate kinase (Shewanella sp. (strain ANA-3)).